Reading from the N-terminus, the 453-residue chain is Homogentisate 1,2-dioxygenase (453 aa).

Catalysis depends on H306, which acts as the Proton acceptor. Positions 349 and 355 each coordinate Fe cation. The homogentisate site is built by Y364 and H385. H385 serves as a coordination point for Fe cation.

Belongs to the homogentisate dioxygenase family. Hexamer; dimer of trimers. Requires Fe cation as cofactor.

It carries out the reaction homogentisate + O2 = 4-maleylacetoacetate + H(+). It participates in amino-acid degradation; L-phenylalanine degradation; acetoacetate and fumarate from L-phenylalanine: step 4/6. Involved in the catabolism of homogentisate (2,5-dihydroxyphenylacetate or 2,5-OH-PhAc), a central intermediate in the degradation of phenylalanine and tyrosine. Catalyzes the oxidative ring cleavage of the aromatic ring of homogentisate to yield maleylacetoacetate. The protein is Homogentisate 1,2-dioxygenase of Rhizobium johnstonii (strain DSM 114642 / LMG 32736 / 3841) (Rhizobium leguminosarum bv. viciae).